The chain runs to 230 residues: Pyridoxine/pyridoxamine 5'-phosphate oxidase (230 aa).

Substrate-binding positions include 21–24 and K87; that span reads RVEY. FMN is bound by residues 82–87, 97–98, K104, and Q126; these read RSVLCK and YT. Substrate contacts are provided by Y144, R148, and S152. FMN contacts are provided by residues 161–162 and W207; that span reads QS. 213–215 lines the substrate pocket; that stretch reads RVH. R217 is an FMN binding site.

This sequence belongs to the pyridoxamine 5'-phosphate oxidase family. Homodimer. The cofactor is FMN.

It catalyses the reaction pyridoxamine 5'-phosphate + O2 + H2O = pyridoxal 5'-phosphate + H2O2 + NH4(+). The catalysed reaction is pyridoxine 5'-phosphate + O2 = pyridoxal 5'-phosphate + H2O2. It participates in cofactor metabolism; pyridoxal 5'-phosphate salvage; pyridoxal 5'-phosphate from pyridoxamine 5'-phosphate: step 1/1. Its pathway is cofactor metabolism; pyridoxal 5'-phosphate salvage; pyridoxal 5'-phosphate from pyridoxine 5'-phosphate: step 1/1. Its function is as follows. Catalyzes the oxidation of either pyridoxine 5'-phosphate (PNP) or pyridoxamine 5'-phosphate (PMP) into pyridoxal 5'-phosphate (PLP). This chain is Pyridoxine/pyridoxamine 5'-phosphate oxidase, found in Mycolicibacterium smegmatis (strain ATCC 700084 / mc(2)155) (Mycobacterium smegmatis).